The primary structure comprises 476 residues: Glucan endo-1,3-beta-glucosidase 9 (476 aa).

The signal sequence occupies residues 1-25 (MARRLFLLLLAVTAGLSLTGTTVRA). N-linked (GlcNAc...) asparagine glycans are attached at residues asparagine 88 and asparagine 101. Glutamate 122 (proton donor) is an active-site residue. Residues asparagine 184, asparagine 216, asparagine 277, asparagine 320, asparagine 342, asparagine 374, and asparagine 405 are each glycosylated (N-linked (GlcNAc...) asparagine). Cysteines 364 and 424 form a disulfide. Serine 453 is lipidated: GPI-anchor amidated serine. Residues 454 to 476 (SSQTPNFFQSWPLLLLFLLSGLF) constitute a propeptide, removed in mature form.

Belongs to the glycosyl hydrolase 17 family. Contains two additional disulfide bonds.

It localises to the secreted. It is found in the cell wall. The protein resides in the cell membrane. The catalysed reaction is Hydrolysis of (1-&gt;3)-beta-D-glucosidic linkages in (1-&gt;3)-beta-D-glucans.. The polypeptide is Glucan endo-1,3-beta-glucosidase 9 (Arabidopsis thaliana (Mouse-ear cress)).